A 309-amino-acid polypeptide reads, in one-letter code: Mitochondrial import receptor subunit TOM34 (309 aa).

3 TPR repeats span residues valine 9–glutamine 42, serine 51–serine 84, and lysine 86–valine 118. At serine 160 the chain carries Phosphoserine. The segment at leucine 161 to aspartate 189 is disordered. Residues glutamate 164–threonine 178 show a composition bias toward basic and acidic residues. The residue at position 186 (serine 186) is a Phosphoserine. TPR repeat units lie at residues alanine 193–glutamate 226, serine 227–asparagine 260, and lysine 262–asparagine 294. Lysine 197 participates in a covalent cross-link: Glycyl lysine isopeptide (Lys-Gly) (interchain with G-Cter in SUMO2).

This sequence belongs to the Tom34 family. In terms of assembly, interacts with HSP90A, VCP, ATP6V1D, KIAA0665, AMPK, and DMAP1 through its TPR repeat.

It is found in the cytoplasm. The protein localises to the mitochondrion outer membrane. Functionally, plays a role in the import of cytosolically synthesized preproteins into mitochondria. Binds the mature portion of precursor proteins. Interacts with cellular components, and possesses weak ATPase activity. May be a chaperone-like protein that helps to keep newly synthesized precursors in an unfolded import compatible state. The sequence is that of Mitochondrial import receptor subunit TOM34 (TOMM34) from Pongo abelii (Sumatran orangutan).